A 323-amino-acid chain; its full sequence is Elongation factor P--(R)-beta-lysine ligase (323 aa).

76 to 78 lines the substrate pocket; it reads SPE. ATP is bound by residues 100 to 102 and asparagine 109; that span reads RNE. Tyrosine 118 contributes to the substrate binding site. Residue 242–243 participates in ATP binding; sequence EL. Glutamate 249 lines the substrate pocket. Position 298 (glycine 298) interacts with ATP.

The protein belongs to the class-II aminoacyl-tRNA synthetase family. EpmA subfamily. In terms of assembly, homodimer.

It carries out the reaction D-beta-lysine + L-lysyl-[protein] + ATP = N(6)-((3R)-3,6-diaminohexanoyl)-L-lysyl-[protein] + AMP + diphosphate + H(+). With EpmB is involved in the beta-lysylation step of the post-translational modification of translation elongation factor P (EF-P). Catalyzes the ATP-dependent activation of (R)-beta-lysine produced by EpmB, forming a lysyl-adenylate, from which the beta-lysyl moiety is then transferred to the epsilon-amino group of a conserved specific lysine residue in EF-P. This Histophilus somni (strain 129Pt) (Haemophilus somnus) protein is Elongation factor P--(R)-beta-lysine ligase.